A 250-amino-acid polypeptide reads, in one-letter code: 3-deoxy-manno-octulosonate cytidylyltransferase (250 aa).

Belongs to the KdsB family.

It is found in the cytoplasm. The enzyme catalyses 3-deoxy-alpha-D-manno-oct-2-ulosonate + CTP = CMP-3-deoxy-beta-D-manno-octulosonate + diphosphate. Its pathway is nucleotide-sugar biosynthesis; CMP-3-deoxy-D-manno-octulosonate biosynthesis; CMP-3-deoxy-D-manno-octulosonate from 3-deoxy-D-manno-octulosonate and CTP: step 1/1. The protein operates within bacterial outer membrane biogenesis; lipopolysaccharide biosynthesis. Activates KDO (a required 8-carbon sugar) for incorporation into bacterial lipopolysaccharide in Gram-negative bacteria. This chain is 3-deoxy-manno-octulosonate cytidylyltransferase, found in Bacteroides thetaiotaomicron (strain ATCC 29148 / DSM 2079 / JCM 5827 / CCUG 10774 / NCTC 10582 / VPI-5482 / E50).